Here is a 748-residue protein sequence, read N- to C-terminus: Signal transducer and activator of transcription 4 (748 aa).

Residues 569 to 664 enclose the SH2 domain; it reads WIDGYVMGFV…ENPLKYLYPD (96 aa). Residue Lys667 is modified to N6-acetyllysine. Tyr693 carries the post-translational modification Phosphotyrosine; by JAK. The residue at position 721 (Ser721) is a Phosphoserine; by MAP2K6.

This sequence belongs to the transcription factor STAT family. As to quaternary structure, forms a homodimer or a heterodimer with a related family member. Interacts with ARL2BP. The SH2 domain interacts, in vitro, with IL12RB2 via a short cytoplasmic domain. Interacts with STAT1. Interacts with JUN; this complex efficiently interacts with the AP-1-related sequence of the IFN-gamma. In terms of processing, acetylation at Lys-667 is required for JAK2-mediated phosphorylation and activation of STAT4. Post-translationally, tyrosine phosphorylated upon IL12 and IFN-alpha activation, but not by IFN-gamma in T-lymphocytes and NK cells. Serine phosphorylation is required for maximal transcriptional activity but not for DNA binding. Phosphorylation by MAP2K6 at Ser-721 is required for full transcriptional activity induced by IL12. However this serine phosphorylation is not required for cell proliferation although critical for IFN-gamma production.

The protein localises to the cytoplasm. It is found in the nucleus. Functionally, transcriptional regulator mainly expressed in hematopoietic cells that plays a critical role in cellular growth, differentiation and immune response. Plays a key role in the differentiation of T-helper 1 cells and the production of interferon-gamma. Also participates in multiple neutrophil functions including chemotaxis and production of the neutrophil extracellular traps. After IL12 binding to its receptor IL12RB2, STAT4 interacts with the intracellular domain of IL12RB2 and becomes tyrosine phosphorylated. Phosphorylated STAT4 then homodimerizes and migrates to the nucleus where it can recognize STAT target sequences present in IL12 responsive genes. Although IL12 appears to be the predominant activating signal, STAT4 can also be phosphorylated and activated in response to IFN-gamma stimulation via JAK1 and TYK2 and in response to different interleukins including IL23, IL2 and IL35. Transcription activation of IFN-gamma gene is mediated by interaction with JUN that forms a complex that efficiently interacts with the AP-1-related sequence of the IFN-gamma promoter. In response to IFN-alpha/beta signaling, acts as a transcriptional repressor and suppresses IL5 and IL13 mRNA expression during response to T-cell receptor (TCR) activation. This is Signal transducer and activator of transcription 4 (STAT4) from Homo sapiens (Human).